The chain runs to 573 residues: AP-4 complex accessory subunit Tepsin (573 aa).

In terms of domain architecture, ENTH spans 8–141; it reads RDRLSFLHRL…FSDAVPQPPS (134 aa). Disordered regions lie at residues 136 to 155 and 194 to 311; these read VPQPPSQPPQIPPPAGMGAQ and NAVR…NDCQ. Over residues 137-150 the composition is skewed to pro residues; the sequence is PQPPSQPPQIPPPA. Residues 217–229 are compositionally biased toward polar residues; that stretch reads PAVTPSASHTHPN. Over residues 260 to 293 the composition is skewed to low complexity; sequence SSPSSQNSSCTSNLSRASDSGSRSGSDSHSGTSR. Positions 294–303 are enriched in basic and acidic residues; the sequence is EPGDLAERAE. Position 400 is a phosphoserine (Ser-400). Residues 497–526 are disordered; the sequence is CSSEQGTESEQRLENTDTPEDSSSPLPWSP. Positions 526-536 are interaction with AP4B1; the sequence is PNSLFAGMELV. The interval 563-573 is interaction with AP4E1; sequence SEPSAFAFLNM.

As to quaternary structure, interacts with AP4B1 and AP4E1; the interaction is direct and mediates the association of TEPSIN with the adapter-like complex 4 (AP-4), a heterotetramer composed of AP4B1, AP4E1, AP4M1 and AP4S1.

It localises to the golgi apparatus. The protein resides in the trans-Golgi network membrane. It is found in the cytoplasmic vesicle. The protein localises to the cytoplasm. Its subcellular location is the cytosol. Functionally, associates with the adapter-like complex 4 (AP-4) and may therefore play a role in vesicular trafficking of proteins at the trans-Golgi network. The sequence is that of AP-4 complex accessory subunit Tepsin from Mus musculus (Mouse).